A 562-amino-acid polypeptide reads, in one-letter code: Arginine--tRNA ligase 1 (562 aa).

Positions 122-132 match the 'HIGH' region motif; it reads PNIAKPFSMGH.

The protein belongs to the class-I aminoacyl-tRNA synthetase family. As to quaternary structure, monomer.

It is found in the cytoplasm. It catalyses the reaction tRNA(Arg) + L-arginine + ATP = L-arginyl-tRNA(Arg) + AMP + diphosphate. This is Arginine--tRNA ligase 1 from Bacillus cereus (strain ZK / E33L).